We begin with the raw amino-acid sequence, 346 residues long: Uroporphyrinogen decarboxylase (346 aa).

Substrate is bound by residues 26–30, F45, D76, Y153, S208, and H323; that span reads RQAGR.

Belongs to the uroporphyrinogen decarboxylase family. In terms of assembly, homodimer.

Its subcellular location is the cytoplasm. The enzyme catalyses uroporphyrinogen III + 4 H(+) = coproporphyrinogen III + 4 CO2. Its pathway is porphyrin-containing compound metabolism; protoporphyrin-IX biosynthesis; coproporphyrinogen-III from 5-aminolevulinate: step 4/4. Functionally, catalyzes the decarboxylation of four acetate groups of uroporphyrinogen-III to yield coproporphyrinogen-III. This chain is Uroporphyrinogen decarboxylase, found in Prochlorococcus marinus subsp. pastoris (strain CCMP1986 / NIES-2087 / MED4).